A 161-amino-acid chain; its full sequence is Nucleotide-binding protein PSEEN4469 (161 aa).

Belongs to the YajQ family.

Functionally, nucleotide-binding protein. The polypeptide is Nucleotide-binding protein PSEEN4469 (Pseudomonas entomophila (strain L48)).